Here is a 22-residue protein sequence, read N- to C-terminus: Chitin-binding protein 3 (22 aa).

Post-translationally, glycosylated; contains 2.5% carbohydrates.

Its function is as follows. Chitin-binding protein. Has antifungal activity against F.solani, F.oxysporum, C.musae and C.gloesporoides but not against P.oligandrum. Depending on concentration the antifungal activity can be fungistatic or fungicidal. Inhibits both spore germination and mycelial growth in F.solani at a concentration of 0.1 mg/ml. Has antifungal activity against C.krusei, C.albicans, C.tropicalis and C.parapsilosis. Has no chitinase, beta-glucanase or hemagglutinating activity. Acts as a flocculent. The polypeptide is Chitin-binding protein 3 (Moringa oleifera (Horseradish tree)).